The chain runs to 287 residues: UBX domain-containing protein 1 (287 aa).

A UBA domain is found at methionine 1–histidine 42. Positions aspartate 44–tyrosine 207 are disordered. 2 stretches are compositionally biased toward basic and acidic residues: residues cysteine 72–lysine 114 and lysine 129–arginine 169. Residues cysteine 72 to lysine 164 are a coiled coil. A compositionally biased stretch (low complexity) spans serine 176–proline 197. The UBX domain maps to lysine 205–valine 284.

The protein localises to the cytoplasm. Its function is as follows. Component of a complex required to couple deglycosylation and proteasome-mediated degradation of misfolded proteins in the endoplasmic reticulum that are retrotranslocated in the cytosol. Involved in ubiquitin-proteasome systems. This is UBX domain-containing protein 1 (ubxn1) from Xenopus tropicalis (Western clawed frog).